The primary structure comprises 291 residues: Protein ZAR1-like (291 aa).

Residues Gly103–Thr152 form a disordered region. Positions Thr106–Arg115 are enriched in low complexity. Basic and acidic residues predominate over residues Thr116–Arg129. The segment at Leu195–Lys280 adopts a 3CxxC-type zinc-finger fold.

It belongs to the ZAR1 family. In terms of assembly, interacts with YBX2. As to expression, expressed in oocytes and zygotes. Predominantly expressed in maturing oocytes before maternal-to-zygotic transition (MZT). Less abundant than Zar1.

The protein resides in the cytoplasm. The protein localises to the cytoplasmic ribonucleoprotein granule. MRNA-binding protein required for maternal mRNA storage, translation and degradation during oocyte maturation. Probably promotes formation of some phase-separated membraneless compartment that stores maternal mRNAs in oocytes: acts by undergoing liquid-liquid phase separation upon binding to maternal mRNAs. Binds to the 3'-UTR of maternal mRNAs, inhibiting their translation. This is Protein ZAR1-like from Mus musculus (Mouse).